The following is a 398-amino-acid chain: Nicotinate phosphoribosyltransferase (398 aa).

A Phosphohistidine; by autocatalysis modification is found at His214.

This sequence belongs to the NAPRTase family. In terms of processing, transiently phosphorylated on a His residue during the reaction cycle. Phosphorylation strongly increases the affinity for substrates and increases the rate of nicotinate D-ribonucleotide production. Dephosphorylation regenerates the low-affinity form of the enzyme, leading to product release.

It carries out the reaction nicotinate + 5-phospho-alpha-D-ribose 1-diphosphate + ATP + H2O = nicotinate beta-D-ribonucleotide + ADP + phosphate + diphosphate. The protein operates within cofactor biosynthesis; NAD(+) biosynthesis; nicotinate D-ribonucleotide from nicotinate: step 1/1. Its function is as follows. Catalyzes the synthesis of beta-nicotinate D-ribonucleotide from nicotinate and 5-phospho-D-ribose 1-phosphate at the expense of ATP. The protein is Nicotinate phosphoribosyltransferase of Xanthomonas campestris pv. campestris (strain B100).